We begin with the raw amino-acid sequence, 99 residues long: Accessory protein p12I (99 aa).

The chain crosses the membrane as a helical span at residues 3–23 (FRLLSPLSPLALTALLLFLLP). 2 short sequence motifs (SH3-binding) span residues 4–11 (RLLSPLSP) and 33–38 (RPPPAP). A helical transmembrane segment spans residues 48-68 (ILSGLLFLLFLPLFFSLPLLL). 2 short sequence motifs (SH3-binding) span residues 70 to 77 (PSLPITMR) and 88 to 93 (KAPSQP). Residue lysine 88 forms a Glycyl lysine isopeptide (Lys-Gly) (interchain with G-Cter in ubiquitin); in isolate LAF linkage.

This sequence belongs to the HTLV-1 accessory protein p12I family. In terms of assembly, p12I is a homodimer. Interacts with human CANX, CALR, ATP6V0C, IL2RB, IL2RG. Binds to MHC-I heavy chains HLA-A2, HLA-B7 and HLA-Cw4. In terms of processing, ubiquitinated; a fraction of P12I is degraded via the ubiquitin system.

It is found in the host endoplasmic reticulum membrane. The protein localises to the host Golgi apparatus. It localises to the host cis-Golgi network membrane. Its function is as follows. p12I is a modulator of T-lymphocyte proliferation and immune function and may contribute to establish a persistent infection. Binds and down-modulates cell surface expression of interleukin-2 receptors IL2RB and IL2RG. Also down-modulates cell surface MHC-I molecules by binding to free immature MHC-I heavy chains in the ER and targeting them to the proteasome for degradation. Binding to IL2RB mediates recruitment of JAK1 and JAK3. As a result of this interaction, p12I increases DNA-binding and transcriptional activity of STAT5. The polypeptide is Accessory protein p12I (Homo sapiens (Human)).